We begin with the raw amino-acid sequence, 31 residues long: Photosystem II reaction center protein T (31 aa).

A helical membrane pass occupies residues 3–23 (ALVYVFLLVGTLMVIFFAIFF).

It belongs to the PsbT family. In terms of assembly, PSII is composed of 1 copy each of membrane proteins PsbA, PsbB, PsbC, PsbD, PsbE, PsbF, PsbH, PsbI, PsbJ, PsbK, PsbL, PsbM, PsbT, PsbX, PsbY, PsbZ, Psb30/Ycf12, at least 3 peripheral proteins of the oxygen-evolving complex and a large number of cofactors. It forms dimeric complexes.

The protein resides in the plastid. Its subcellular location is the chloroplast thylakoid membrane. Functionally, found at the monomer-monomer interface of the photosystem II (PS II) dimer, plays a role in assembly and dimerization of PSII. PSII is a light-driven water plastoquinone oxidoreductase, using light energy to abstract electrons from H(2)O, generating a proton gradient subsequently used for ATP formation. This is Photosystem II reaction center protein T from Gracilaria tenuistipitata var. liui (Red alga).